Consider the following 372-residue polypeptide: Methylthioribose-1-phosphate isomerase (372 aa).

D252 serves as the catalytic Proton donor.

The protein belongs to the eIF-2B alpha/beta/delta subunits family. MtnA subfamily.

It localises to the cytoplasm. It is found in the nucleus. It carries out the reaction 5-(methylsulfanyl)-alpha-D-ribose 1-phosphate = 5-(methylsulfanyl)-D-ribulose 1-phosphate. Its pathway is amino-acid biosynthesis; L-methionine biosynthesis via salvage pathway; L-methionine from S-methyl-5-thio-alpha-D-ribose 1-phosphate: step 1/6. In terms of biological role, catalyzes the interconversion of methylthioribose-1-phosphate (MTR-1-P) into methylthioribulose-1-phosphate (MTRu-1-P). The protein is Methylthioribose-1-phosphate isomerase of Yarrowia lipolytica (strain CLIB 122 / E 150) (Yeast).